A 156-amino-acid polypeptide reads, in one-letter code: Protein SprT (156 aa).

The region spanning 15–153 (NRYFNKHFTP…CKKCKEILVL (139 aa)) is the SprT-like domain. His67 serves as a coordination point for Zn(2+). Residue Glu68 is part of the active site. Residue His71 participates in Zn(2+) binding.

This sequence belongs to the SprT family. Zn(2+) serves as cofactor.

The protein resides in the cytoplasm. The chain is Protein SprT from Glaesserella parasuis serovar 5 (strain SH0165) (Haemophilus parasuis).